The following is a 432-amino-acid chain: UPF0597 protein APL_1605 (432 aa).

Belongs to the UPF0597 family.

The protein is UPF0597 protein APL_1605 of Actinobacillus pleuropneumoniae serotype 5b (strain L20).